A 65-amino-acid polypeptide reads, in one-letter code: Large ribosomal subunit protein bL35 (65 aa).

Belongs to the bacterial ribosomal protein bL35 family.

The sequence is that of Large ribosomal subunit protein bL35 from Synechococcus sp. (strain WH7803).